The primary structure comprises 215 residues: Adenylate kinase (215 aa).

10–15 (GAGKGT) lines the ATP pocket. An NMP region spans residues 30–59 (STGDMFRAAMKNNTELGKKAKSFMDNGDLV). Residues Thr31, Arg36, 57 to 59 (DLV), 85 to 88 (GFPR), and Gln92 contribute to the AMP site. Residues 126 to 163 (GRWICRTCGKTYHEIYNPPKVPGKCDLDGGELYQRDDD) are LID. Arg127 provides a ligand contact to ATP. Positions 130 and 133 each coordinate Zn(2+). 136–137 (TY) contacts ATP. Positions 150 and 153 each coordinate Zn(2+). AMP-binding residues include Arg160 and Arg171. Gln199 provides a ligand contact to ATP.

Belongs to the adenylate kinase family. Monomer.

It is found in the cytoplasm. It catalyses the reaction AMP + ATP = 2 ADP. The protein operates within purine metabolism; AMP biosynthesis via salvage pathway; AMP from ADP: step 1/1. Its function is as follows. Catalyzes the reversible transfer of the terminal phosphate group between ATP and AMP. Plays an important role in cellular energy homeostasis and in adenine nucleotide metabolism. This is Adenylate kinase from Listeria monocytogenes serotype 4b (strain CLIP80459).